A 101-amino-acid polypeptide reads, in one-letter code: Large ribosomal subunit protein bL21 (101 aa).

The protein belongs to the bacterial ribosomal protein bL21 family. As to quaternary structure, part of the 50S ribosomal subunit. Contacts protein L20.

Its function is as follows. This protein binds to 23S rRNA in the presence of protein L20. The polypeptide is Large ribosomal subunit protein bL21 (Beutenbergia cavernae (strain ATCC BAA-8 / DSM 12333 / CCUG 43141 / JCM 11478 / NBRC 16432 / NCIMB 13614 / HKI 0122)).